Consider the following 355-residue polypeptide: MSFSDNLAKILDKYENLGKKLSSGIMGDEFVKASKEYAELEDVVAKIKEYNKAKSELEEANNFKLEVGLDNATLEMIEDEIHTLENSLPKLERAVKIALLPKDDADSKSAIIEVRAGSGGEEAALFAAVLFNMYQRYAELKGWRFEILAISDTGIGGYKEASASIKGKDVFSKLKFESGVHRVQRVPETESQGRIHTSAATVAVLPEAEEVDIKIEDKDLRIDTYRASGAGGQHVNTTDSAVRITHIPTGITVALQDEKSQHKNKAKALKILRARIYEEERRKKEQERADSRRGQVGSGDRSERIRTYNFPQGRVSDHRINLTLYKIDEVVKNGQLDEFVEALIADDEAKKLSEI.

Position 233 is an N5-methylglutamine (glutamine 233). The segment covering 280 to 293 (ERRKKEQERADSRR) has biased composition (basic and acidic residues). A disordered region spans residues 280–308 (ERRKKEQERADSRRGQVGSGDRSERIRTY).

This sequence belongs to the prokaryotic/mitochondrial release factor family. Methylated by PrmC. Methylation increases the termination efficiency of RF1.

It localises to the cytoplasm. In terms of biological role, peptide chain release factor 1 directs the termination of translation in response to the peptide chain termination codons UAG and UAA. The protein is Peptide chain release factor 1 of Rickettsia felis (strain ATCC VR-1525 / URRWXCal2) (Rickettsia azadi).